Reading from the N-terminus, the 473-residue chain is Vasculin-like protein 1 (473 aa).

Over residues 14–25 (STPQSSKSSTAT) the composition is skewed to polar residues. Positions 14 to 55 (STPQSSKSSTATFDKHGEHLSRGEGRFGISRRRHNSSDGFFN) are disordered. The segment covering 26–38 (FDKHGEHLSRGEG) has biased composition (basic and acidic residues). A phosphoserine mark is found at Ser-49 and Ser-76. 2 disordered regions span residues 88 to 127 (GTTG…RKGC) and 155 to 189 (DFPS…AKQP). Residues 103–112 (SQRSGGSSTG) show a composition bias toward polar residues. Over residues 113-125 (NHRHWNGSFHSRK) the composition is skewed to basic residues. Position 199 is a phosphoserine (Ser-199). 2 disordered regions span residues 235–267 (LVPK…SRES) and 281–316 (LAAG…RRTT). The residue at position 289 (Ser-289) is a Phosphoserine. The segment covering 292-309 (ESPSSTTPPIEISSSRLT) has biased composition (low complexity). Thr-298 bears the Phosphothreonine mark. Ser-381 carries the post-translational modification Phosphoserine. The tract at residues 453 to 473 (ECEDSDSETSSSQTSDDDAWK) is disordered.

The protein belongs to the vasculin family.

Its subcellular location is the nucleus. In terms of biological role, possible transcription factor. In Mus musculus (Mouse), this protein is Vasculin-like protein 1 (Gpbp1l1).